Consider the following 33-residue polypeptide: pyr operon leader peptide (33 aa).

This is pyr operon leader peptide (pyrL) from Salmonella typhi.